Consider the following 131-residue polypeptide: Small ribosomal subunit protein uS8 (131 aa).

It belongs to the universal ribosomal protein uS8 family. In terms of assembly, part of the 30S ribosomal subunit. Contacts proteins S5 and S12.

Its function is as follows. One of the primary rRNA binding proteins, it binds directly to 16S rRNA central domain where it helps coordinate assembly of the platform of the 30S subunit. The protein is Small ribosomal subunit protein uS8 of Azoarcus sp. (strain BH72).